The sequence spans 736 residues: Segment polarity protein dishevelled homolog DVL-2 (736 aa).

The 82-residue stretch at 1–82 folds into the DIX domain; that stretch reads MAETKVIYHL…RVVSWLASSE (82 aa). The disordered stretch occupies residues 79 to 241; sequence ASSEGSQPDS…PRLERTSSFS (163 aa). A compositionally biased stretch (pro residues) spans 100–114; it reads EPPPPVPPPIPPPPA. Positions 149-160 are enriched in basic and acidic residues; the sequence is MRRDRVRRRESS. The segment covering 181 to 195 has biased composition (low complexity); sequence ESSSTLLTSEIETSI. Polar residues predominate over residues 205–217; the sequence is SRFSSSTEQSSAS. Residues 219-231 show a composition bias toward basic residues; the sequence is LLKRHRRRRKQRP. The PDZ domain occupies 254–326; it reads TVTLNMEKYN…NDDAVRVLRD (73 aa). The interaction with custos stretch occupies residues 327 to 427; sequence IVHKPGPIVL…LASVVKVMAS (101 aa). Residues 428–502 form the DEP domain; that stretch reads PESGLEVRDR…SEQCYYIFGD (75 aa). Low complexity-rich tracts occupy residues 574 to 593 and 616 to 629; these read MGSA…SNRS and KSGS…STRS. The segment at 574 to 664 is disordered; sequence MGSAGSQHSE…HPPSVHSYAA (91 aa).

The protein belongs to the DSH family. In terms of assembly, can form homomultimers. Interacts with prickle1. Interacts (via PDZ domain) with ccdc88c/dal and dact1-B/dpr. Interacts (via DIX domain) with ARP/Axin-related protein and dact1-A/frodo. Interacts with sdc4, possibly via fz7. Interacts directly (via DEP domain) with efnb1/ephrin-B1 and indirectly with the phosphorylated ephrin receptors ephb1 and ephb2, via association with SH domain-containing adapters. May interact with lrrc6. Interacts with custos (via NLS1 and NLS2); the interaction is negatively regulated by Wnt stimulation. Phosphorylated. Phosphorylation is controlled by frizzled proteins, correlates with the onset of embryo dorsalizing events and is higher in the dorsal half of early cleavage embryos. Phosphorylated on tyrosine residues in response to association with efnb1/ephrin-B1. In terms of tissue distribution, expressed equally in both animal-vegetal and dorsal-ventral directions of the early blastula. Becomes enriched on the dorsal side of the embryo after cortical rotation. Expressed along the anterior margin of eye field of neurulae (stage 16 embryos) and in the anterolateral crescent that borders the eye field. Continues to be expressed in the optic cup at stage 26. Expressed in the central nervous system throughout the early tailbud stage including the entire hindbrain.

Its subcellular location is the cytoplasm. It is found in the cytoplasmic vesicle. It localises to the cell projection. The protein resides in the cilium. The protein localises to the nucleus. Its subcellular location is the cell membrane. In terms of biological role, involved in at least 2 independent signaling cascades, controlling cell fate via canonical Wnt signaling and cell polarity via a planar cell polarity (PCP) cascade. Acts synergistically with dal/dapple-like to activate Wnt signaling, stabilizing ctnnb1/beta-catenin and leading to dorsal axis formation. Also prevents degradation of ctnnb1/beta-catenin by displacing gsk3 from a complex with ARP/Axin-related protein. Has an additional role in anterior-posterior (A/P) axis formation, specifying different neuroectodermal cell fates along the A/P axis in a dose-dependent manner by activating several early patterning genes. In the PCP pathway, required at the cell membrane for PCP-mediated neural and mesodermal convergent extension during gastrulation and subsequent neural tube closure, acting to activate jnk. Also involved in blastopore closure and archenteron elongation during early, but not late, gastrulation. Associates with ephrin receptors and ligands and acts as part of a downstream PCP pathway to mediate ephrin-mediated cell repulsion via activation of rhoa. Required for efnb1/ephrin-B1-driven movement of non-retinal progenitor cells into the retina during eye field formation. Patterns the hindbrain. Required for ciliogenesis. Controls the docking of basal bodies to the apical plasma membrane; mediates the activation, but not localization of rhoa at the apical surface of ciliated cells during basal body docking. Furthermore, required for the association of basal bodies with membrane-bound vesicles and the vesicle-trafficking protein exoc4/sec8, and this association is in turn required for basal body docking. Once basal bodies are docked, required for the planar polarization of basal bodies that underlies ciliary beating and the directional fluid flow across ciliated epithelia. This is Segment polarity protein dishevelled homolog DVL-2 (dvl2) from Xenopus laevis (African clawed frog).